We begin with the raw amino-acid sequence, 1001 residues long: E3 ubiquitin-protein ligase etc-1 (1001 aa).

Residues 28-57 enclose the IQ domain; sequence QEKAARKVQKFWRGHRVQHNQRLLFRAEFD. Positions 66 to 115 form a coiled coil; it reads LEETIKMAQLLVNFYETNKDEERLVMTLSELVKLKTSDKEFEKRIRETQR. One can recognise an HECT domain in the interval 658–1001; sequence KVNDLKSMVR…INSGAGFELA (344 aa). Cys969 (glycyl thioester intermediate) is an active-site residue.

In terms of assembly, interacts with ify-1 and cyb-1.

It carries out the reaction S-ubiquitinyl-[E2 ubiquitin-conjugating enzyme]-L-cysteine + [acceptor protein]-L-lysine = [E2 ubiquitin-conjugating enzyme]-L-cysteine + N(6)-ubiquitinyl-[acceptor protein]-L-lysine.. It participates in protein modification; protein ubiquitination. Functionally, E3 ubiquitin-protein ligase that accepts ubiquitin from E2 ubiquitin-conjugating enzymes, such as ubc-18, in the form of a thioester and then directly transfers the ubiquitin to targeted substrates. Ubiquitinates ify-1 and cyb-1 targeting them for degradation in post-meiotic embryos. In Caenorhabditis elegans, this protein is E3 ubiquitin-protein ligase etc-1.